A 295-amino-acid polypeptide reads, in one-letter code: Proline-rich protein 18 (295 aa).

Residues 1–13 are compositionally biased toward pro residues; it reads MPFPPMPPPPAPA. The interval 1–133 is disordered; it reads MPFPPMPPPP…GAGPCPDSAA (133 aa). The span at 14–29 shows a compositional bias: low complexity; the sequence is PGAQAARQLPRRPCAA. A Phosphoserine modification is found at Ser-47. The residue at position 83 (Arg-83) is an Omega-N-methylarginine. The segment covering 103 to 126 has biased composition (low complexity); the sequence is ARTTYAATSAGTGTTAAGTSSGAG. Arg-172 is subject to Asymmetric dimethylarginine. Low complexity predominate over residues 181–192; that stretch reads ARAAGPRRGGPA. The disordered stretch occupies residues 181–227; it reads ARAAGPRRGGPASDPDAPPTAGQGRRAPPPGAQLLHGGLQVPQLSPR. Omega-N-methylarginine is present on Arg-188.

The chain is Proline-rich protein 18 (PRR18) from Homo sapiens (Human).